Reading from the N-terminus, the 305-residue chain is Type II secretion system protein C (305 aa).

The Cytoplasmic segment spans residues 1-29 (MEFKQLPPLAAWPRLLSQNTLRWQKPISE). Residues 30–50 (GLTLLLLVASAWTLGKMVWVV) traverse the membrane as a helical segment. The Periplasmic segment spans residues 51–305 (SAEQTPVPTW…GQQHDVYIQF (255 aa)).

It belongs to the GSP C family.

It is found in the cell inner membrane. Its function is as follows. Involved in a type II secretion system (T2SS, formerly general secretion pathway, GSP) for the export of proteins. Required for secretion of cholera toxin through the outer membrane. The chain is Type II secretion system protein C (epsC) from Vibrio cholerae serotype O1 (strain ATCC 39315 / El Tor Inaba N16961).